Consider the following 488-residue polypeptide: Envelope glycoprotein gp62 (488 aa).

An N-terminal signal peptide occupies residues 1–20; it reads MGKFLATLILFFQFCPLILS. At 21–442 the chain is on the extracellular side; sequence DYSPSCCTLT…LGLSQWAREA (422 aa). Residues Asn-140 and Asn-222 are each glycosylated (N-linked (GlcNAc...) asparagine; by host). A CXXC motif is present at residues 225–228; it reads CIVC. Disulfide bonds link Cys-225–Cys-228, Cys-225–Cys-401, and Cys-393–Cys-400. Residues Asn-244 and Asn-272 are each glycosylated (N-linked (GlcNAc...) asparagine; by host). The fusion peptide stretch occupies residues 313–333; that stretch reads AVPVAVWLVSALAMGAGMAGG. Coiled-coil stretches lie at residues 341-387 and 397-429; these read ASGR…LLFW and QEQC…GWGL. An immunosuppression region spans residues 376 to 392; that stretch reads AQNRRGLDLLFWEQGGL. The short motif at 393–401 is the CX6CC element; it reads CKALQEQCC. An N-linked (GlcNAc...) asparagine; by host glycan is attached at Asn-404. The chain crosses the membrane as a helical span at residues 443–463; that stretch reads LQTGITLVALLLLVILAGPCI. The S-palmitoyl cysteine; by host moiety is linked to residue Cys-462. At 464-488 the chain is on the cytoplasmic side; sequence LRQLRHLPSRVRYPHYSLINPESSL.

As to quaternary structure, the mature envelope protein (Env) consists of a trimer of SU-TM heterodimers attached by a labile interchain disulfide bond. Specific enzymatic cleavages in vivo yield mature proteins. Envelope glycoproteins are synthesized as an inactive precursor that is N-glycosylated and processed likely by host cell furin or by a furin-like protease in the Golgi to yield the mature SU and TM proteins. The cleavage site between SU and TM requires the minimal sequence [KR]-X-[KR]-R. In terms of processing, the CXXC motif is highly conserved across a broad range of retroviral envelope proteins. It is thought to participate in the formation of a labile disulfide bond possibly with the CX6CC motif present in the transmembrane protein. Isomerization of the intersubunit disulfide bond to an SU intrachain disulfide bond is thought to occur upon receptor recognition in order to allow membrane fusion. Post-translationally, the transmembrane protein is palmitoylated.

The protein localises to the virion membrane. Its subcellular location is the host cell membrane. Its function is as follows. The surface protein (SU) attaches the virus to the host cell by binding to its receptor. This interaction triggers the refolding of the transmembrane protein (TM) and is thought to activate its fusogenic potential by unmasking its fusion peptide. Fusion occurs at the host cell plasma membrane. The transmembrane protein (TM) acts as a class I viral fusion protein. Under the current model, the protein has at least 3 conformational states: pre-fusion native state, pre-hairpin intermediate state, and post-fusion hairpin state. During viral and target cell membrane fusion, the coiled coil regions (heptad repeats) assume a trimer-of-hairpins structure, positioning the fusion peptide in close proximity to the C-terminal region of the ectodomain. The formation of this structure appears to drive apposition and subsequent fusion of viral and target cell membranes. Membranes fusion leads to delivery of the nucleocapsid into the cytoplasm. This is Envelope glycoprotein gp62 (env) from Human T-cell leukemia virus 1 (isolate Zaire EL subtype B) (HTLV-1).